Consider the following 351-residue polypeptide: tRNA pseudouridine synthase D (351 aa).

The active-site Nucleophile is the aspartate 81. One can recognise a TRUD domain in the interval 158–304 (GVPNYFGSQR…MRHERRAIEL (147 aa)).

The protein belongs to the pseudouridine synthase TruD family.

The enzyme catalyses uridine(13) in tRNA = pseudouridine(13) in tRNA. In terms of biological role, responsible for synthesis of pseudouridine from uracil-13 in transfer RNAs. The chain is tRNA pseudouridine synthase D from Aliivibrio fischeri (strain ATCC 700601 / ES114) (Vibrio fischeri).